The following is a 684-amino-acid chain: MNKKIFSMMAASIIGSAAMTPSAGTNTGEHLTPELFMTLSRVSEMALSPDGKTAVYAVSFPDVKTNKATRELFTVNLDGSGRKQITDTESNEYAPAWMADGKRIAFMSNEGGSMQLWVMNADGTERRQLSNIEGGITGFLFSPDEKQVLFTKDIKFGKRTKDIYPDLDKATGRIITDLMYKHWDEWVETIPHPFIANATDGMITTGKDIMEGEPYEAPMKPWSGIEDFSWSPDGQNIAYASRKKTGMAYSLSTNSDIYIYNLTSGRTHNISEGMMGYDTYPKFSPDGKSIAWISMERDGYESDLKRLFVADLATGKRTHVNPTFDYNVDMIQWAPDSKGIYFLACKEAETNLWEITLKTGKIRQITQGQHDYADFSVRNDVMLAKRHSFELPDDLYRVNPKNGAAQAVTAENKAILDRLTPIACEKRWMKTTDGGNMLTWVVLPPDFDKNKKYPAILYCQGGPQNTVSQFWSFRWNLRLMAEQGYIVIAPNRHGVPGFGQKWNEQISGDYGGQNMRDYLTAVDEMKKEPYVDGDRIGAVGASYGGFSVYWLAGHHDKRFAAFIAHAGIFNLEMQYATTEEMWFANWDIGGPFWEKDNVVAQRTYATSPHKYVQNWDTPILMIHGELDFRILASQAMAAFDAAQLRGVPSEMLIYPDENHWVLQPQNALLFHRTFFGWLDRWLKK.

An N-terminal signal peptide occupies residues 1-24; it reads MNKKIFSMMAASIIGSAAMTPSAG. 3 WD repeats span residues 87–127, 220–259, and 323–363; these read DTES…TERR, KPWS…DIYI, and TFDY…GKIR. Active-site charge relay system residues include serine 542, aspartate 627, and histidine 659.

This sequence belongs to the peptidase S9C family. As to quaternary structure, homodimer.

The protein resides in the periplasm. Its function is as follows. Catalyzes the removal of dipeptides from the N-terminus of oligopeptides. Prefers Ala and hydrophobic residues except Pro at the P1 position, and has no preference for P2 residues. Shows high dipeptidyl peptidase activity toward the synthetic substrates Lys-Ala-, Gly-Phe-, Met-Leu-, and Ser-Tyr-methylcoumaryl-7-amide (MCA), and slowly hydrolyzes Val-Tyr-MCA. Is likely involved in amino acid metabolism and bacterial growth of asaccharolytic P.gingivalis, that utilizes amino acids from extracellular proteinaceous nutrients as energy and carbon sources. The protein is Dipeptidyl-peptidase 5 of Porphyromonas gingivalis (strain ATCC 33277 / DSM 20709 / CIP 103683 / JCM 12257 / NCTC 11834 / 2561).